Consider the following 389-residue polypeptide: SH3 and F-BAR domain-containing protein DDB_G0274695 (389 aa).

The F-BAR domain occupies 3–258; that stretch reads EQFKDNFWGP…VITQIDKLED (256 aa). Positions 119-192 form a coiled coil; the sequence is KLNKERKDME…QDYRDSVNKL (74 aa). The segment covering 300–328 has biased composition (low complexity); it reads LTSSVSSNSLTSSYNSATTTPTPAPRSTP. Positions 300–329 are disordered; sequence LTSSVSSNSLTSSYNSATTTPTPAPRSTPI. One can recognise an SH3 domain in the interval 332–389; the sequence is SKKKQAKALYDYVGSDATELDFFAGDIITILDEDESGWFRGELGDRIGLYPSNYCEPI.

This is SH3 and F-BAR domain-containing protein DDB_G0274695 from Dictyostelium discoideum (Social amoeba).